Consider the following 617-residue polypeptide: Putative type VI secretion system protein VgrGA (617 aa).

Disordered stretches follow at residues 325–344 and 449–469; these read GQQPQALEEESGGEPTTLSN and RTFHATNPSPYPLPASKTRTS.

It belongs to the VgrG protein family.

A Vgr protein that is probably part of a type VI secretion system (T6SS). May be required for export of proteins involved in Rhs-mediated cellular contact-dependent growth inhibition (CDI). This is Putative type VI secretion system protein VgrGA (vgrGA) from Dickeya dadantii (strain 3937) (Erwinia chrysanthemi (strain 3937)).